The chain runs to 156 residues: Small ribosomal subunit protein uS7 (156 aa).

This sequence belongs to the universal ribosomal protein uS7 family. In terms of assembly, part of the 30S ribosomal subunit. Contacts proteins S9 and S11.

Its function is as follows. One of the primary rRNA binding proteins, it binds directly to 16S rRNA where it nucleates assembly of the head domain of the 30S subunit. Is located at the subunit interface close to the decoding center, probably blocks exit of the E-site tRNA. This is Small ribosomal subunit protein uS7 from Streptococcus thermophilus (strain CNRZ 1066).